The following is a 152-amino-acid chain: Lipoprotein signal peptidase (152 aa).

The next 3 helical transmembrane spans lie at 5-25, 61-81, and 84-104; these read LFVL…FWIV, WFFV…LATH, and LNIW…GNFI. Active-site residues include D114 and D130. Residues 125-145 traverse the membrane as a helical segment; the sequence is IFNVADSYLTVGVILLVICLW.

It belongs to the peptidase A8 family.

Its subcellular location is the cell membrane. It carries out the reaction Release of signal peptides from bacterial membrane prolipoproteins. Hydrolyzes -Xaa-Yaa-Zaa-|-(S,diacylglyceryl)Cys-, in which Xaa is hydrophobic (preferably Leu), and Yaa (Ala or Ser) and Zaa (Gly or Ala) have small, neutral side chains.. It participates in protein modification; lipoprotein biosynthesis (signal peptide cleavage). Functionally, this protein specifically catalyzes the removal of signal peptides from prolipoproteins. The protein is Lipoprotein signal peptidase of Streptococcus pyogenes serotype M2 (strain MGAS10270).